Here is a 259-residue protein sequence, read N- to C-terminus: MLPLNVTITQITEESPLVRTFFFDHRFEDMDPGQFVMVWVRGVDEVPMGLSRNNSITVQKVGEATSKLFELKEGDSFGLRGPFGKGFTLPSRGEKVLLIAGGVGAAPLSPYAEAASAAGAEVHTILGARSAGDLLFEWRFEALGDIYASTDDGSKGVKGFVTDVLKGLDVAAYDRIAVCGPEIMMASVFRLLEERKVLEKAEFSLHRYFKCGIGVCGACCIDLSGLRVCKDGPVFSGIQLLGSELGKYSRDASGRRIKI.

Residues 1–89 (MLPLNVTITQ…RGPFGKGFTL (89 aa)) enclose the FAD-binding FR-type domain. [2Fe-2S] cluster contacts are provided by Cys211, Cys216, Cys219, and Cys229.

It belongs to the PyrK family. In terms of assembly, heterotetramer of 2 PyrK and 2 PyrD type B subunits. The cofactor is [2Fe-2S] cluster. Requires FAD as cofactor.

Its pathway is pyrimidine metabolism; UMP biosynthesis via de novo pathway; orotate from (S)-dihydroorotate (NAD(+) route): step 1/1. Its function is as follows. Responsible for channeling the electrons from the oxidation of dihydroorotate from the FMN redox center in the PyrD type B subunit to the ultimate electron acceptor NAD(+). This is Probable dihydroorotate dehydrogenase B (NAD(+)), electron transfer subunit from Methanosarcina acetivorans (strain ATCC 35395 / DSM 2834 / JCM 12185 / C2A).